A 217-amino-acid polypeptide reads, in one-letter code: Adenylate kinase (217 aa).

Residue 10-15 (GAGKGT) coordinates ATP. Residues 30–59 (STGDMLRAAVKAESELGLQVKEVMASGGLV) form an NMP region. Residues T31, R36, 57–59 (GLV), 85–88 (GFPR), and Q92 contribute to the AMP site. The LID stretch occupies residues 122–159 (GRRVHEGSGRIYHVKYDPPKVEGKDDETGEALIQREDD). ATP is bound by residues R123 and 132-133 (IY). Residues R156 and R167 each contribute to the AMP site. An ATP-binding site is contributed by G203.

It belongs to the adenylate kinase family. Monomer.

The protein localises to the cytoplasm. The enzyme catalyses AMP + ATP = 2 ADP. Its pathway is purine metabolism; AMP biosynthesis via salvage pathway; AMP from ADP: step 1/1. Functionally, catalyzes the reversible transfer of the terminal phosphate group between ATP and AMP. Plays an important role in cellular energy homeostasis and in adenine nucleotide metabolism. This is Adenylate kinase from Marinobacter nauticus (strain ATCC 700491 / DSM 11845 / VT8) (Marinobacter aquaeolei).